A 287-amino-acid chain; its full sequence is MKNVLSIQSHVVFGHAGNGASEFPMRRLGVNVWPLNTVQFSNHTQYGHWEGSAIDASQMLALVEGIGAIGMLPRCDAVLSGYLGTPEQAQAVIEIVRAVKAANPHALYFCDPVMGTATGYRVEPGIQEFLVRTMPEVSDVMCPNHSELQRLVGREIETVEEAVAACRELMKRGPKMVLVKHLLDRNSLADRFNMLVVTGREAWMGQRPLYPFARQPVGVGDMTSAVFVARTLLGDSVRSAFEHTLAAVNAVVRATWDAGRYELEIVAAQDDIARPRDWFDAWVVDPA.

Residues S9 and 44 to 45 (TQ) contribute to the substrate site. Residues D111, E147, and K180 each coordinate ATP. D221 provides a ligand contact to substrate.

The protein belongs to the pyridoxine kinase family. PdxY subfamily. Homodimer. Mg(2+) serves as cofactor.

The catalysed reaction is pyridoxal + ATP = pyridoxal 5'-phosphate + ADP + H(+). The protein operates within cofactor metabolism; pyridoxal 5'-phosphate salvage; pyridoxal 5'-phosphate from pyridoxal: step 1/1. Pyridoxal kinase involved in the salvage pathway of pyridoxal 5'-phosphate (PLP). Catalyzes the phosphorylation of pyridoxal to PLP. The protein is Pyridoxal kinase PdxY of Paraburkholderia phymatum (strain DSM 17167 / CIP 108236 / LMG 21445 / STM815) (Burkholderia phymatum).